A 30-amino-acid chain; its full sequence is ILQKAVLDCLKAAGSSLSKAAITAIYNKIT.

Thr-30 bears the Threonine amide mark.

As to quaternary structure, homodimer.

Its subcellular location is the secreted. In terms of biological role, shows antibacterial activity against both Gram-positive and Gram-negative bacteria. Its antimicrobial activity is optimal at NaCl concentrations below 100 mM, suggesting that the antimicrobial actions of this peptide may take place intracellularly rather than extracellularly. Has no activity against the fungus C.albicans. Has modest hemolytic activity. The sequence is that of Dicynthaurin from Halocynthia aurantium (Sea peach).